The following is a 371-amino-acid chain: Archaeal glycosylation protein Q (371 aa).

The interval 19–39 is disordered; the sequence is QRSDGSMPAGHNGPYHDPETP.

The protein localises to the cytoplasm. It participates in cell surface structure biogenesis; S-layer biogenesis. Functionally, putative isomerase involved in the N-glycosylation pathway. Required for the appearance of the methyl ester of hexuronic acid found at position four of the pentasaccharide N-linked to the S-layer glycoprotein. Either involved in preparing the third sugar for attachment of the fourth pentasaccharide subunit or processing the fourth sugar prior to its addition to the lipid-linked trisaccharide. The protein is Archaeal glycosylation protein Q (aglQ) of Haloferax volcanii (strain ATCC 29605 / DSM 3757 / JCM 8879 / NBRC 14742 / NCIMB 2012 / VKM B-1768 / DS2) (Halobacterium volcanii).